Reading from the N-terminus, the 84-residue chain is Large ribosomal subunit protein bL31B (84 aa).

Belongs to the bacterial ribosomal protein bL31 family. Type B subfamily. In terms of assembly, part of the 50S ribosomal subunit.

This chain is Large ribosomal subunit protein bL31B, found in Acinetobacter baumannii (strain AB307-0294).